We begin with the raw amino-acid sequence, 178 residues long: Actin-related protein 2/3 complex subunit 3-B (178 aa).

Belongs to the ARPC3 family. As to quaternary structure, component of the Arp2/3 complex composed of actr2/arp2, actr3/arp3, arpc1 (arpc1a or arpc1b), arpc2, arpc3, arpc4 and arpc5.

The protein localises to the cytoplasm. The protein resides in the cytoskeleton. It is found in the cell projection. It localises to the nucleus. Its function is as follows. Component of the Arp2/3 complex, a multiprotein complex that mediates actin polymerization upon stimulation by nucleation-promoting factor (NPF). The Arp2/3 complex mediates the formation of branched actin networks in the cytoplasm, providing the force for cell motility. In addition to its role in the cytoplasmic cytoskeleton, the Arp2/3 complex also promotes actin polymerization in the nucleus, thereby regulating gene transcription and repair of damaged DNA. The Arp2/3 complex promotes homologous recombination (HR) repair in response to DNA damage by promoting nuclear actin polymerization, leading to drive motility of double-strand breaks (DSBs). The chain is Actin-related protein 2/3 complex subunit 3-B (arpc3-b) from Xenopus laevis (African clawed frog).